Reading from the N-terminus, the 185-residue chain is Threonylcarbamoyl-AMP synthase (185 aa).

Residues 4–185 (SWRVQQAARE…LATGEIVRPG (182 aa)) form the YrdC-like domain.

This sequence belongs to the SUA5 family. TsaC subfamily.

It is found in the cytoplasm. It catalyses the reaction L-threonine + hydrogencarbonate + ATP = L-threonylcarbamoyladenylate + diphosphate + H2O. Functionally, required for the formation of a threonylcarbamoyl group on adenosine at position 37 (t(6)A37) in tRNAs that read codons beginning with adenine. Catalyzes the conversion of L-threonine, HCO(3)(-)/CO(2) and ATP to give threonylcarbamoyl-AMP (TC-AMP) as the acyladenylate intermediate, with the release of diphosphate. The sequence is that of Threonylcarbamoyl-AMP synthase from Pseudomonas putida (strain W619).